A 229-amino-acid chain; its full sequence is Sorting nexin-10A (229 aa).

Residues 11–128 enclose the PX domain; sequence FISVWVRDPQ…HLFLQSQLSI (118 aa). A 1,2-diacyl-sn-glycero-3-phospho-(1D-myo-inositol-3-phosphate) is bound by residues R54 and R95.

The protein belongs to the sorting nexin family.

It is found in the cytoplasm. The protein resides in the endosome membrane. Its subcellular location is the cytoskeleton. It localises to the microtubule organizing center. The protein localises to the centrosome. In terms of biological role, probable phosphoinositide-binding protein involved in protein sorting and membrane trafficking in endosomes. May play a role in cilium biogenesis through regulation of the transport and the localization of proteins to the cilium. In Danio rerio (Zebrafish), this protein is Sorting nexin-10A (snx10a).